The primary structure comprises 147 residues: 3-dehydroquinate dehydratase (147 aa).

Tyrosine 23 serves as the catalytic Proton acceptor. Substrate-binding residues include asparagine 74, histidine 80, and aspartate 87. Residue histidine 100 is the Proton donor of the active site. Residues 101-102 (LS) and arginine 111 contribute to the substrate site.

The protein belongs to the type-II 3-dehydroquinase family. Homododecamer.

It carries out the reaction 3-dehydroquinate = 3-dehydroshikimate + H2O. It participates in metabolic intermediate biosynthesis; chorismate biosynthesis; chorismate from D-erythrose 4-phosphate and phosphoenolpyruvate: step 3/7. Its function is as follows. Catalyzes a trans-dehydration via an enolate intermediate. This chain is 3-dehydroquinate dehydratase, found in Clostridium botulinum (strain Kyoto / Type A2).